A 52-amino-acid chain; its full sequence is Ovomucoid (52 aa).

The Kazal-like domain maps to Val2–Cys52. Disulfide bonds link Cys4/Cys34, Cys12/Cys31, and Cys20/Cys52. N-linked (GlcNAc...) asparagine glycosylation is present at Asn41.

The protein resides in the secreted. The sequence is that of Ovomucoid from Scythrops novaehollandiae (Channel-billed cuckoo).